The sequence spans 257 residues: Phosphonates import ATP-binding protein PhnC (257 aa).

In terms of domain architecture, ABC transporter spans 2-246 (IEFRNVSKVY…KFAEIYGDVA (245 aa)). 35–42 (GLSGAGKS) is an ATP binding site.

This sequence belongs to the ABC transporter superfamily. Phosphonates importer (TC 3.A.1.9.1) family. In terms of assembly, the complex is composed of two ATP-binding proteins (PhnC), two transmembrane proteins (PhnE) and a solute-binding protein (PhnD).

The protein resides in the cell membrane. It carries out the reaction phosphonate(out) + ATP + H2O = phosphonate(in) + ADP + phosphate + H(+). Part of the ABC transporter complex PhnCDE involved in phosphonates import. Responsible for energy coupling to the transport system. This chain is Phosphonates import ATP-binding protein PhnC, found in Bacillus cereus (strain ATCC 14579 / DSM 31 / CCUG 7414 / JCM 2152 / NBRC 15305 / NCIMB 9373 / NCTC 2599 / NRRL B-3711).